Reading from the N-terminus, the 1307-residue chain is Contactin-associated protein like 5-3 (1307 aa).

The first 24 residues, 1–24 (MDFVPRLNSVLTLVLSGLWHFGLT), serve as a signal peptide directing secretion. Residues 25-1238 (ATNCDNCDDP…PLTNAVLSDS (1214 aa)) are Extracellular-facing. The region spanning 31–175 (CDDPLASFLS…IGMRMEVYGC (145 aa)) is the F5/8 type C domain. Cys31 and Cys175 are disulfide-bonded. Laminin G-like domains lie at 181–361 (VADF…TFSC) and 368–545 (PITF…IDLC). A glycan (N-linked (GlcNAc...) asparagine) is linked at Asn283. An intrachain disulfide couples Cys330 to Cys361. Residue Asn497 is glycosylated (N-linked (GlcNAc...) asparagine). Intrachain disulfides connect Cys513-Cys545, Cys551-Cys562, Cys556-Cys571, and Cys573-Cys583. Positions 547–584 (IKDRCLPNYCEHGGHCVQTWTTFYCNCSNTGYTGATCH) constitute an EGF-like 1 domain. A Fibrinogen C-terminal domain is found at 585–792 (DSIYEQSCEV…LRCYGDRHFW (208 aa)). Residues Asn600, Asn624, and Asn637 are each glycosylated (N-linked (GlcNAc...) asparagine). The Laminin G-like 3 domain occupies 793–958 (NAVSFSTEAS…MVTSGVRPGC (166 aa)). Intrachain disulfides connect Cys931-Cys958, Cys962-Cys975, Cys969-Cys984, Cys986-Cys996, and Cys1165-Cys1200. The region spanning 959 to 997 (PGHCSSYGNNCHNGGKCVEKHNSYSCDCTKSPYEGPFCQ) is the EGF-like 2 domain. The Laminin G-like 4 domain occupies 1019-1200 (PVSKNTSTSS…VQGSLREFSC (182 aa)). Residues 1239–1259 (AVIGGVIAVVTFITFCVIGIM) traverse the membrane as a helical segment. Over 1260–1307 (TRFLYQHKQSHCTSQKKEKEYSENLDSSFRHDIDLQSTTSKCKREYFI) the chain is Cytoplasmic.

It belongs to the neurexin family.

Its subcellular location is the membrane. Functionally, may play a role in the correct development and proper functioning of the peripheral and central nervous system and be involved in cell adhesion and intercellular communication. This Rattus norvegicus (Rat) protein is Contactin-associated protein like 5-3 (Cntnap5c).